Consider the following 829-residue polypeptide: Periplasmic nitrate reductase (829 aa).

Positions 1–30 (MKLSRRDFMKANAVAAAAAVAGVSAPTLAA) form a signal peptide, tat-type signal. In terms of domain architecture, 4Fe-4S Mo/W bis-MGD-type spans 41-97 (IKWDKAPCRFCGTGCSVLVGSQDGRVVATQGDPDAPVNRGLNCIKGYFLSKIMYGED). Cysteine 48, cysteine 51, cysteine 55, and cysteine 83 together coordinate [4Fe-4S] cluster. Mo-bis(molybdopterin guanine dinucleotide)-binding positions include lysine 85, glutamine 152, asparagine 177, cysteine 181, 214-221 (WGSNMAEM), 245-249 (STFEH), 264-266 (QTD), methionine 374, glutamine 378, asparagine 484, 510-511 (SD), lysine 533, aspartate 560, and 719-728 (TGRVLEHWHT). Residue phenylalanine 795 coordinates substrate. Positions 803 and 820 each coordinate Mo-bis(molybdopterin guanine dinucleotide).

This sequence belongs to the prokaryotic molybdopterin-containing oxidoreductase family. NasA/NapA/NarB subfamily. Component of the periplasmic nitrate reductase NapAB complex composed of NapA and NapB. The cofactor is [4Fe-4S] cluster. Mo-bis(molybdopterin guanine dinucleotide) serves as cofactor. Predicted to be exported by the Tat system. The position of the signal peptide cleavage has not been experimentally proven.

Its subcellular location is the periplasm. It carries out the reaction 2 Fe(II)-[cytochrome] + nitrate + 2 H(+) = 2 Fe(III)-[cytochrome] + nitrite + H2O. Its function is as follows. Catalytic subunit of the periplasmic nitrate reductase complex NapAB. Receives electrons from NapB and catalyzes the reduction of nitrate to nitrite. In Aeromonas salmonicida (strain A449), this protein is Periplasmic nitrate reductase.